The chain runs to 206 residues: Protein YmaB (206 aa).

This chain is Protein YmaB (ymaB), found in Bacillus subtilis (strain 168).